The chain runs to 69 residues: Protein SlyX homolog (69 aa).

Belongs to the SlyX family.

This Pseudomonas paraeruginosa (strain DSM 24068 / PA7) (Pseudomonas aeruginosa (strain PA7)) protein is Protein SlyX homolog.